Reading from the N-terminus, the 63-residue chain is ATP synthase F(0) complex subunit 8 (63 aa).

The chain crosses the membrane as a helical span at residues 8–24; it reads TWLLTILSMLLTLFVLF. Lys57 bears the N6-acetyllysine mark.

Belongs to the ATPase protein 8 family. As to quaternary structure, component of the ATP synthase complex composed at least of ATP5F1A/subunit alpha, ATP5F1B/subunit beta, ATP5MC1/subunit c (homooctomer), MT-ATP6/subunit a, MT-ATP8/subunit 8, ATP5ME/subunit e, ATP5MF/subunit f, ATP5MG/subunit g, ATP5MK/subunit k, ATP5MJ/subunit j, ATP5F1C/subunit gamma, ATP5F1D/subunit delta, ATP5F1E/subunit epsilon, ATP5PF/subunit F6, ATP5PB/subunit b, ATP5PD/subunit d, ATP5PO/subunit OSCP. ATP synthase complex consists of a soluble F(1) head domain (subunits alpha(3) and beta(3)) - the catalytic core - and a membrane F(0) domain - the membrane proton channel (subunits c, a, 8, e, f, g, k and j). These two domains are linked by a central stalk (subunits gamma, delta, and epsilon) rotating inside the F1 region and a stationary peripheral stalk (subunits F6, b, d, and OSCP). Interacts with PRICKLE3.

Its subcellular location is the mitochondrion membrane. In terms of biological role, subunit 8, of the mitochondrial membrane ATP synthase complex (F(1)F(0) ATP synthase or Complex V) that produces ATP from ADP in the presence of a proton gradient across the membrane which is generated by electron transport complexes of the respiratory chain. ATP synthase complex consist of a soluble F(1) head domain - the catalytic core - and a membrane F(1) domain - the membrane proton channel. These two domains are linked by a central stalk rotating inside the F(1) region and a stationary peripheral stalk. During catalysis, ATP synthesis in the catalytic domain of F(1) is coupled via a rotary mechanism of the central stalk subunits to proton translocation. In vivo, can only synthesize ATP although its ATP hydrolase activity can be activated artificially in vitro. Part of the complex F(0) domain. This chain is ATP synthase F(0) complex subunit 8, found in Balaenoptera musculus (Blue whale).